The sequence spans 384 residues: Epoxyqueuosine reductase (384 aa).

Asp-144 (proton donor) is an active-site residue. Positions 186–218 (LPLPVDQPVEEGCGKCVACMTICPTGAIVEPYT) constitute a 4Fe-4S ferredoxin-type domain. [4Fe-4S] cluster contacts are provided by Cys-198, Cys-201, Cys-204, Cys-208, Cys-224, Cys-251, Cys-254, and Cys-258.

The protein belongs to the QueG family. Monomer. The cofactor is cob(II)alamin. It depends on [4Fe-4S] cluster as a cofactor.

Its subcellular location is the cytoplasm. It catalyses the reaction epoxyqueuosine(34) in tRNA + AH2 = queuosine(34) in tRNA + A + H2O. It participates in tRNA modification; tRNA-queuosine biosynthesis. In terms of biological role, catalyzes the conversion of epoxyqueuosine (oQ) to queuosine (Q), which is a hypermodified base found in the wobble positions of tRNA(Asp), tRNA(Asn), tRNA(His) and tRNA(Tyr). The polypeptide is Epoxyqueuosine reductase (Salmonella typhimurium (strain LT2 / SGSC1412 / ATCC 700720)).